Consider the following 219-residue polypeptide: Vacuolar protein sorting-associated protein 20 homolog 1 (219 aa).

Positions 20-60 (SLKTQRRKLGQYQQKLEKVIEAEKQAARDLIREKRKDRALL) form a coiled coil. Positions 171–219 (PEVPTKESEESEKLDLPDVPTKTPVASNAEITPAESATKTKVLEEPLPA) are disordered. Residues 174-186 (PTKESEESEKLDL) show a composition bias toward basic and acidic residues. A compositionally biased stretch (polar residues) spans 194-209 (PVASNAEITPAESATK).

The protein belongs to the SNF7 family. In terms of assembly, component of the endosomal sorting required for transport complex III (ESCRT-III), composed at least of VPS2, VPS20, VPS24 and VPS32. Interacts with SKD1.

The protein resides in the endosome. Functionally, component of the ESCRT-III complex, which is required for multivesicular bodies (MVBs) formation and sorting of endosomal cargo proteins into MVBs. The ESCRT-III complex is probably involved in the concentration of MVB cargo. This is Vacuolar protein sorting-associated protein 20 homolog 1 (VPS20.1) from Arabidopsis thaliana (Mouse-ear cress).